We begin with the raw amino-acid sequence, 143 residues long: uncharacterized protein (143 aa).

Residues 24 to 78 (IRQRREWQNMSQTTLGEAIGVTFQQVQKYEKGVNRVGAGRLQQISKALKVEPSYF) form the HTH cro/C1-type domain. Residues 35-54 (QTTLGEAIGVTFQQVQKYEK) constitute a DNA-binding region (H-T-H motif).

This is an uncharacterized protein from Sinorhizobium fredii (strain NBRC 101917 / NGR234).